The following is a 487-amino-acid chain: MTYFDQDLTSLHADLVAKKISATELAKATFANMNQVDPKLGAFLNLNEEQALQQAAALDQDGIDANNVFAGIPMAVKDNIVTKGLTTTAASKMLENFVPVYNATVVDKLLASNALIVGKTNMDEFAMGGSTETSAFHVTRNPWDISRVPGGSSGGSAVAVASGQVPVALGSDTGGSIRQPSSFNGIVGMKPTYGRVSRWGLIAFGSSLDQIGPMTRTVKDNAAALNMIAGNDVHDTTSSKQTVPDFTAGLTGDIKGMKIGLPKEYMGDGIDPKVREVIQQAVKQFEDLGATVEEVSLPNSRYGVAAYYIIASSEASSNLQRFDGIRYGFRADDVKNLEDVYVRSRSEGFGDEVKRRIMLGTFSLSAGYYDAYFHKAGQVRTMIINDFNKVFEDYDLIMGPVAPTPAFKLGDELSDPITMYMNDVLTIPVNLAGLPGMSVPAGFADGLPVGLQLIGKAFDESTMYRAGYAFEQATQVYKQTPKVGGAN.

Catalysis depends on charge relay system residues lysine 77 and serine 152. Serine 176 serves as the catalytic Acyl-ester intermediate.

Belongs to the amidase family. GatA subfamily. In terms of assembly, heterotrimer of A, B and C subunits.

The catalysed reaction is L-glutamyl-tRNA(Gln) + L-glutamine + ATP + H2O = L-glutaminyl-tRNA(Gln) + L-glutamate + ADP + phosphate + H(+). Its function is as follows. Allows the formation of correctly charged Gln-tRNA(Gln) through the transamidation of misacylated Glu-tRNA(Gln) in organisms which lack glutaminyl-tRNA synthetase. The reaction takes place in the presence of glutamine and ATP through an activated gamma-phospho-Glu-tRNA(Gln). The chain is Glutamyl-tRNA(Gln) amidotransferase subunit A from Lactiplantibacillus plantarum (strain ATCC BAA-793 / NCIMB 8826 / WCFS1) (Lactobacillus plantarum).